The sequence spans 296 residues: Putative F-box protein At1g67623 (296 aa).

The F-box domain maps to 21–70 (SLCLDSLPEDLLVEISSCTGASSLSAVRNLRLVSKSFRRICDEKYVFYRL).

The protein is Putative F-box protein At1g67623 of Arabidopsis thaliana (Mouse-ear cress).